The following is a 257-amino-acid chain: Protein TONNEAU 1b (257 aa).

In terms of domain architecture, LisH spans 73 to 105 (SGRLLSALICEYLDWAQLNHTLKVYQPECNSAK). 2 disordered regions span residues 148–216 (QVMG…EDMP) and 231–257 (LDRK…EGKD). Residues 187-199 (SVSASQASGAATS) show a composition bias toward low complexity. 2 stretches are compositionally biased toward basic and acidic residues: residues 201–212 (YRKDESNWRYDT) and 244–257 (NVKD…EGKD).

As to quaternary structure, interacts with CEN1, LNG1/TRM2 and LNG2/TRM1 (via C-terminus).

It is found in the cytoplasm. The protein resides in the cytoskeleton. Functionally, involved in the control of the dynamic organization of the cortical cytoskeleton. May play a role in the organization of microtubule arrays at the centrosome through interaction with centrin 1 (CEN1). The protein is Protein TONNEAU 1b (TON1B) of Arabidopsis thaliana (Mouse-ear cress).